Here is a 77-residue protein sequence, read N- to C-terminus: U14-theraphotoxin-Cg1a 2 (77 aa).

The first 21 residues, 1 to 21, serve as a signal peptide directing secretion; that stretch reads MKTSVLLVILGIAAITVQCTA. The propeptide occupies 22–49; that stretch reads SESVKQDSLRTFVDAVLGWNAEMASEAR. 3 disulfide bridges follow: C50/C64, C57/C69, and C63/C75. K77 is subject to Lysine amide.

This sequence belongs to the neurotoxin 10 (Hwtx-1) family. 65 (Jztx-21) subfamily. Expressed by the venom gland.

The protein localises to the secreted. Probable ion channel inhibitor. This is U14-theraphotoxin-Cg1a 2 from Chilobrachys guangxiensis (Chinese earth tiger tarantula).